Reading from the N-terminus, the 365-residue chain is Terpene cyclase DEP1 (365 aa).

A run of 8 helical transmembrane segments spans residues 10-30, 82-102, 116-136, 158-178, 188-208, 233-253, 297-317, and 338-358; these read LYLS…NGMF, LLFF…LIES, AWAM…IYLY, LPII…PAWF, ALIA…VGIT, LILA…GALF, LFSQ…AQLL, and MIYL…SFAL.

Belongs to the membrane-bound ascI terpene cyclase family.

Its subcellular location is the membrane. It functions in the pathway polyketide biosynthesis. Its function is as follows. Part of the gene cluster that mediates the biosynthesis of depudecin, a highly oxidized eleven-carbon linear polyketide that acts as a histone deacetylase (HDAC) inhibitor and makes a small contribution to pathogenesis. The reducing polyketide synthase DEP5 is the central enzyme in depudecin biosynthesis by yielding the backbone polyketide chain. The monooxygenases DEP2 and DEP4, as well as the uncharacterized protein DEP1, then act as tailoring enzymes to modify the intermediate polyketide chain into depudecin. The polypeptide is Terpene cyclase DEP1 (Fusarium langsethiae).